We begin with the raw amino-acid sequence, 856 residues long: MDAQYTPHAIESAAQTFWDKNQCFKAVEDATREKFYCLSMFPYPSGKLHMGHVRNYTIGDVVSRFQRMQGKNVLQPMGWDAFGMPAENAAIKNRVPPGAWTYDNIDAMRRQLKALGFAYDWNREFATCDVDYYRWEQWFFTKLVEKGLVYKKMSTVNWDPVDQTVLANEQVIEGRGWRSGALVERKEIPLWFLKITDYADELLADLDKVDWPEQVKTMQRNWIGKSTGVELSFAVADSSEQLEVYTTRPDTLYGVTYVAVAAGHPLARQAAQDNPALGDFLEECQQGGNSEAELATMEKKGMDTGHKAIHPLTGREVPIFVANFVLMEYGTGAVMAVPAHDQRDWEFATKYGIPIEPVIADAEGNTPDLSQGAHTEHGKLINSGEFDGLEFDAAFDAIAARLEANGQGTVKTNFRLRDWGVARQRYWGAPIPVKYGPEGQTVPLTDDELPVALPMEVEVDASGSPLKKMPAFYDLGEGWTRETDTFDTFMESSWYYARFASADNMEAMLDERADYWLPVDLYIGGIEHAILHLLYARFFHKLMRDFGLVASDEPFQRLLTQGMVIAETFYRANDDGSKDWFNPADVDVQRDDKGRPVSAILREDGQPVEMGGIEKMSKSKNNGVDPQAMIDRFGADTVRLFMMFAAPPEQSLEWSDSGVEGAHRFLKRLWKLVADHLDAGTPAALDADALNDDQKTLRRKTHETIAKASDDIGRRTTFNTAIAAVMELVNAIGRFEDTSPQGLAVTREALEACVLVLAPIVPHACHALWDALGHDTPVIDAAWPQADEAAMVKDSVELAVQVNGKLRARLDVPAAADKAAIEAQALEAENVRRHTEGKTIRKVIVVPGKLVNIVAN.

The short motif at 42 to 52 (PYPSGKLHMGH) is the 'HIGH' region element. Positions 615–619 (KMSKS) match the 'KMSKS' region motif. Lysine 618 provides a ligand contact to ATP.

Belongs to the class-I aminoacyl-tRNA synthetase family.

It localises to the cytoplasm. The enzyme catalyses tRNA(Leu) + L-leucine + ATP = L-leucyl-tRNA(Leu) + AMP + diphosphate. This chain is Leucine--tRNA ligase, found in Chromohalobacter salexigens (strain ATCC BAA-138 / DSM 3043 / CIP 106854 / NCIMB 13768 / 1H11).